Reading from the N-terminus, the 280-residue chain is 2-dehydro-3-deoxyphosphooctonate aldolase (280 aa).

It belongs to the KdsA family.

It localises to the cytoplasm. It carries out the reaction D-arabinose 5-phosphate + phosphoenolpyruvate + H2O = 3-deoxy-alpha-D-manno-2-octulosonate-8-phosphate + phosphate. The protein operates within carbohydrate biosynthesis; 3-deoxy-D-manno-octulosonate biosynthesis; 3-deoxy-D-manno-octulosonate from D-ribulose 5-phosphate: step 2/3. Its pathway is bacterial outer membrane biogenesis; lipopolysaccharide biosynthesis. The sequence is that of 2-dehydro-3-deoxyphosphooctonate aldolase from Rhizobium meliloti (strain 1021) (Ensifer meliloti).